Consider the following 491-residue polypeptide: Chromosomal replication initiator protein DnaA (491 aa).

The domain I, interacts with DnaA modulators stretch occupies residues M1–L69. A domain II region spans residues L69–L154. The interval P155–S371 is domain III, AAA+ region. ATP is bound by residues G199, G201, K202, and T203. Residues K372 to R491 are domain IV, binds dsDNA.

The protein belongs to the DnaA family. As to quaternary structure, oligomerizes as a right-handed, spiral filament on DNA at oriC.

The protein localises to the cytoplasm. Its function is as follows. Plays an essential role in the initiation and regulation of chromosomal replication. ATP-DnaA binds to the origin of replication (oriC) to initiate formation of the DNA replication initiation complex once per cell cycle. Binds the DnaA box (a 9 base pair repeat at the origin) and separates the double-stranded (ds)DNA. Forms a right-handed helical filament on oriC DNA; dsDNA binds to the exterior of the filament while single-stranded (ss)DNA is stabiized in the filament's interior. The ATP-DnaA-oriC complex binds and stabilizes one strand of the AT-rich DNA unwinding element (DUE), permitting loading of DNA polymerase. After initiation quickly degrades to an ADP-DnaA complex that is not apt for DNA replication. Binds acidic phospholipids. The protein is Chromosomal replication initiator protein DnaA of Francisella tularensis subsp. tularensis (strain WY96-3418).